Reading from the N-terminus, the 513-residue chain is GTPase Obg (513 aa).

An Obg domain is found at 3-160 (THFVDRVVVH…LDLHLEVKTL (158 aa)). The OBG-type G domain occupies 161–337 (ADVALVGFPS…LSFAMAELVS (177 aa)). Residues 167–174 (GFPSAGKS), 192–196 (FTTLV), 213–216 (DVPG), 289–292 (NKAD), and 318–320 (SAV) contribute to the GTP site. The Mg(2+) site is built by S174 and T194. The OCT domain occupies 355–444 (PRAVDDQGFK…ANAVVFDWEP (90 aa)). Residues 457-513 (GSDLRLEDHSRPTRDEKRLQERERRAAKVTARDELEAERRAGHWTAADEADEELSQR) form a disordered region. Residues 458–497 (SDLRLEDHSRPTRDEKRLQERERRAAKVTARDELEAERRA) show a composition bias toward basic and acidic residues. Acidic residues predominate over residues 504 to 513 (DEADEELSQR).

Belongs to the TRAFAC class OBG-HflX-like GTPase superfamily. OBG GTPase family. Monomer. Mg(2+) is required as a cofactor.

It is found in the cytoplasm. An essential GTPase which binds GTP, GDP and possibly (p)ppGpp with moderate affinity, with high nucleotide exchange rates and a fairly low GTP hydrolysis rate. Plays a role in control of the cell cycle, stress response, ribosome biogenesis and in those bacteria that undergo differentiation, in morphogenesis control. This Kineococcus radiotolerans (strain ATCC BAA-149 / DSM 14245 / SRS30216) protein is GTPase Obg.